Reading from the N-terminus, the 141-residue chain is Large ribosomal subunit protein uL11 (141 aa).

Belongs to the universal ribosomal protein uL11 family. In terms of assembly, part of the ribosomal stalk of the 50S ribosomal subunit. Interacts with L10 and the large rRNA to form the base of the stalk. L10 forms an elongated spine to which L12 dimers bind in a sequential fashion forming a multimeric L10(L12)X complex. In terms of processing, one or more lysine residues are methylated.

Its function is as follows. Forms part of the ribosomal stalk which helps the ribosome interact with GTP-bound translation factors. This Streptococcus equi subsp. equi (strain 4047) protein is Large ribosomal subunit protein uL11.